Reading from the N-terminus, the 182-residue chain is ATP synthase subunit delta (182 aa).

The protein belongs to the ATPase delta chain family. In terms of assembly, F-type ATPases have 2 components, F(1) - the catalytic core - and F(0) - the membrane proton channel. F(1) has five subunits: alpha(3), beta(3), gamma(1), delta(1), epsilon(1). F(0) has three main subunits: a(1), b(2) and c(10-14). The alpha and beta chains form an alternating ring which encloses part of the gamma chain. F(1) is attached to F(0) by a central stalk formed by the gamma and epsilon chains, while a peripheral stalk is formed by the delta and b chains.

Its subcellular location is the cell membrane. Its function is as follows. F(1)F(0) ATP synthase produces ATP from ADP in the presence of a proton or sodium gradient. F-type ATPases consist of two structural domains, F(1) containing the extramembraneous catalytic core and F(0) containing the membrane proton channel, linked together by a central stalk and a peripheral stalk. During catalysis, ATP synthesis in the catalytic domain of F(1) is coupled via a rotary mechanism of the central stalk subunits to proton translocation. Functionally, this protein is part of the stalk that links CF(0) to CF(1). It either transmits conformational changes from CF(0) to CF(1) or is implicated in proton conduction. This chain is ATP synthase subunit delta, found in Lactobacillus johnsonii (strain CNCM I-12250 / La1 / NCC 533).